The chain runs to 575 residues: 4-substituted benzoates-glutamate ligase GH3.12 (575 aa).

The stretch at 6 to 33 (DINETFEKQLKDLTSNVKSIQDNLLEEI) forms a coiled coil. AMP is bound at residue 95 to 96 (SS). 120 to 123 (YDLR) lines the salicylate pocket. AMP-binding residues include Thr-301, Thr-324, Ser-328, Tyr-347, Asp-398, and Arg-417.

It belongs to the IAA-amido conjugating enzyme family. Interacts with the P.syringae pv. maculicola effector HopW1-1 (via C-terminus). In terms of tissue distribution, expressed in seedlings, mostly in cotyledons, leaves, hypocotyls and sporadically in roots. Not detected in unchallenged adult plants, except in flowers.

Its activity is regulated as follows. Specifically and reversibly inhibited by salicylic acid (SA). In terms of biological role, catalyzes the conjugation of specific amino acids (e.g. Glu and possibly His, Lys, and Met) to their preferred acyl substrates (e.g. 4-substituted benzoates), in a magnesium ion- and ATP-dependent manner. Can use 4-substituted benzoates such as 4-aminobenzoate (pABA), 4-fluorobenzoate and 4-hydroxybenzoate (4-HBA), and, to a lesser extent, benzoate, vanillate and trans-cinnamate, but not 2-substituted benzoates and salicylic acid (SA), as conjugating acyl substrates. Involved in both basal and induced resistance in a SA-dependent manner. Confers resistance to virulent and avirulent pathogens (at least bacteria and oomycetes), and promotes SA glucosides accumulation. Required for the establishment of hyper-sensitive response (HR) upon incompatible interaction and subsequent systemic acquired resistance (SAR). The sequence is that of 4-substituted benzoates-glutamate ligase GH3.12 (GH3.12) from Arabidopsis thaliana (Mouse-ear cress).